Here is a 465-residue protein sequence, read N- to C-terminus: ATP synthase subunit beta (465 aa).

148–155 (GGAGVGKT) contacts ATP.

Belongs to the ATPase alpha/beta chains family. As to quaternary structure, F-type ATPases have 2 components, CF(1) - the catalytic core - and CF(0) - the membrane proton channel. CF(1) has five subunits: alpha(3), beta(3), gamma(1), delta(1), epsilon(1). CF(0) has three main subunits: a(1), b(2) and c(9-12). The alpha and beta chains form an alternating ring which encloses part of the gamma chain. CF(1) is attached to CF(0) by a central stalk formed by the gamma and epsilon chains, while a peripheral stalk is formed by the delta and b chains.

It is found in the cell inner membrane. It catalyses the reaction ATP + H2O + 4 H(+)(in) = ADP + phosphate + 5 H(+)(out). Produces ATP from ADP in the presence of a proton gradient across the membrane. The catalytic sites are hosted primarily by the beta subunits. The chain is ATP synthase subunit beta from Chromobacterium violaceum (strain ATCC 12472 / DSM 30191 / JCM 1249 / CCUG 213 / NBRC 12614 / NCIMB 9131 / NCTC 9757 / MK).